Here is a 200-residue protein sequence, read N- to C-terminus: Rho GDP-dissociation inhibitor 2 (200 aa).

Residues 1–40 (MTEKAPEPHVEEDDDELDGKLNYKPPPQKSLKELQEMDKD) form a disordered region. Thr2 is subject to N-acetylthreonine. Lys20 is modified (N6-acetyllysine). A Phosphotyrosine modification is found at Tyr23. N6-acetyllysine is present on residues Lys24, Lys39, Lys46, Lys101, and Lys123. The span at 30–40 (SLKELQEMDKD) shows a compositional bias: basic and acidic residues. Ser144 carries the post-translational modification Phosphoserine. An N6-acetyllysine modification is found at Lys174.

Belongs to the Rho GDI family. Interacts with RHOA. Interacts with RAC1. Interacts with RAC2. Interacts with CDC42.

The protein localises to the cytoplasm. It is found in the cytosol. Its function is as follows. Regulates the GDP/GTP exchange reaction of the Rho proteins by inhibiting the dissociation of GDP from them, and the subsequent binding of GTP to them. Regulates reorganization of the actin cytoskeleton mediated by Rho family members. This Bos taurus (Bovine) protein is Rho GDP-dissociation inhibitor 2 (ARHGDIB).